Reading from the N-terminus, the 371-residue chain is Poly(rC)-binding protein 3 (371 aa).

3 consecutive KH domains span residues 45–95 (TLTI…TITG), 129–182 (PVTL…TISG), and 293–357 (ASTH…QYLI).

Widely expressed, with highest levels in testis and fat tissues and lowest in heart.

It localises to the cytoplasm. Single-stranded nucleic acid binding protein that binds preferentially to oligo dC. The chain is Poly(rC)-binding protein 3 (Pcbp3) from Mus musculus (Mouse).